We begin with the raw amino-acid sequence, 294 residues long: Acetylglutamate kinase (294 aa).

Substrate contacts are provided by residues 63–64 (GG), Arg-85, and Asn-188.

The protein belongs to the acetylglutamate kinase family. ArgB subfamily.

Its subcellular location is the cytoplasm. The enzyme catalyses N-acetyl-L-glutamate + ATP = N-acetyl-L-glutamyl 5-phosphate + ADP. It functions in the pathway amino-acid biosynthesis; L-arginine biosynthesis; N(2)-acetyl-L-ornithine from L-glutamate: step 2/4. In terms of biological role, catalyzes the ATP-dependent phosphorylation of N-acetyl-L-glutamate. The sequence is that of Acetylglutamate kinase from Methanococcus maripaludis (strain C7 / ATCC BAA-1331).